The primary structure comprises 321 residues: NADPH-dependent codeinone reductase 1-5 (321 aa).

The NADPH site is built by Thr27 and Asp51. Active-site proton donor residues include Tyr56 and His119. Residue His119 coordinates substrate. Residues Gln187, Ser214, Leu216, Ser264, and Arg269 each coordinate NADPH.

This sequence belongs to the aldo/keto reductase family. As to expression, latex secreting cells (laticifer cells). Expressed constitutively and ubiquitously with highest levels in capsules.

It localises to the cytoplasm. The protein resides in the cytosol. It carries out the reaction codeine + NADP(+) = codeinone + NADPH + H(+). The enzyme catalyses neopine + NADP(+) = neopinone + NADPH + H(+). The catalysed reaction is morphine + NADP(+) = morphinone + NADPH + H(+). It catalyses the reaction neomorphine + NADP(+) = neomorphinone + NADPH + H(+). Its pathway is alkaloid biosynthesis; morphine biosynthesis. In terms of biological role, NADPH-dependent codeinone reductase involved in biosynthesis of morphinan-type benzylisoquinoline and opiate alkaloids natural products. Reduces codeinone to codeine in the penultimate step in morphine biosynthesis. Can use morphinone, hydrocodone and hydromorphone as substrate during reductive reaction with NADPH as cofactor, and morphine and dihydrocodeine as substrate during oxidative reaction with NADP as cofactor. Converts morphinone to morphine, and neomorphinone to neomorphine. Reduces irreversibly neopinone, a spontaneous isomer of codeinone, to neopine; in planta, neopine levels are limited to low levels. The sequence is that of NADPH-dependent codeinone reductase 1-5 from Papaver somniferum (Opium poppy).